A 185-amino-acid polypeptide reads, in one-letter code: Orotate phosphoribosyltransferase (185 aa).

Residues Arg98, Lys99, Lys102, His104, and 128–136 (EDVTTTGGS) contribute to the 5-phospho-alpha-D-ribose 1-diphosphate site. Positions 132 and 160 each coordinate orotate.

Belongs to the purine/pyrimidine phosphoribosyltransferase family. PyrE subfamily. In terms of assembly, homodimer. Mg(2+) serves as cofactor.

The catalysed reaction is orotidine 5'-phosphate + diphosphate = orotate + 5-phospho-alpha-D-ribose 1-diphosphate. It participates in pyrimidine metabolism; UMP biosynthesis via de novo pathway; UMP from orotate: step 1/2. Functionally, catalyzes the transfer of a ribosyl phosphate group from 5-phosphoribose 1-diphosphate to orotate, leading to the formation of orotidine monophosphate (OMP). The sequence is that of Orotate phosphoribosyltransferase from Bradyrhizobium sp. (strain BTAi1 / ATCC BAA-1182).